The following is a 505-amino-acid chain: Deoxyguanosinetriphosphate triphosphohydrolase (505 aa).

Residues 66–273 (RLTHSMEVQQ…MEAADDISYC (208 aa)) form the HD domain.

The protein belongs to the dGTPase family. Type 1 subfamily. Homotetramer. The cofactor is Mg(2+).

The catalysed reaction is dGTP + H2O = 2'-deoxyguanosine + triphosphate + H(+). Its function is as follows. dGTPase preferentially hydrolyzes dGTP over the other canonical NTPs. The chain is Deoxyguanosinetriphosphate triphosphohydrolase from Escherichia coli O7:K1 (strain IAI39 / ExPEC).